The primary structure comprises 411 residues: Argininosuccinate synthase (411 aa).

ATP-binding positions include 11-19 and alanine 37; that span reads AYSGGLDTS. Residues tyrosine 88 and serine 93 each contribute to the L-citrulline site. Residue 116–124 coordinates ATP; it reads SHGATGKGN. L-aspartate is bound by residues threonine 120, asparagine 124, and aspartate 125. Asparagine 124 contributes to the L-citrulline binding site. Residues arginine 128, serine 181, serine 190, glutamate 271, and tyrosine 283 each contribute to the L-citrulline site.

It belongs to the argininosuccinate synthase family. As to quaternary structure, homotetramer.

The protein resides in the cytoplasm. It is found in the cytosol. It catalyses the reaction L-citrulline + L-aspartate + ATP = 2-(N(omega)-L-arginino)succinate + AMP + diphosphate + H(+). It functions in the pathway amino-acid biosynthesis; L-arginine biosynthesis; L-arginine from L-ornithine and carbamoyl phosphate: step 2/3. Its pathway is nitrogen metabolism; urea cycle; (N(omega)-L-arginino)succinate from L-aspartate and L-citrulline: step 1/1. Functionally, one of the enzymes of the urea cycle, the metabolic pathway transforming neurotoxic amonia produced by protein catabolism into inocuous urea in the liver of ureotelic animals. Catalyzes the formation of arginosuccinate from aspartate, citrulline and ATP and together with ASL it is responsible for the biosynthesis of arginine in most body tissues. This Xenopus laevis (African clawed frog) protein is Argininosuccinate synthase.